A 414-amino-acid chain; its full sequence is Wilms tumor protein homolog A (414 aa).

Glycyl lysine isopeptide (Lys-Gly) (interchain with G-Cter in SUMO) cross-links involve residues Lys-55 and Lys-158. Positions 217–225 match the 9aaTAD motif; that stretch reads MTWNQMNLG. C2H2-type zinc fingers lie at residues 288 to 312, 318 to 342, and 348 to 370; these read FMCAYPGCNKRYFKLSHLQMHSRKH, YQCDFKDCERRFSRSDQLKRHQRRH, and FQCKTCQRKFSRSDHLKTHTRTH. Important for interaction with target DNA stretches follow at residues 332 to 346 and 358 to 366; these read SDQLKRHQRRHTGIK and SRSDHLKTH. The KTS motif signature appears at 373 to 375; sequence KTS. Residues 379-403 form a C2H2-type 4 zinc finger; sequence FSCRWPSCQKKFARSDELVRHHNMH.

It belongs to the EGR C2H2-type zinc-finger protein family. In terms of tissue distribution, expressed around the pronephric anlage and in the pronephros; expression is restricted to the splanchnic mesoderm (the site where the glomus forms) from tailbud stages, and the glomus of early tadpoles. Not expressed in the pronephric tubules or pronephric duct. In tadpoles (stage 38-39), additional expression begins in the heart. Also expressed in the adult kidney (mesonephros).

The protein resides in the nucleus. The protein localises to the cytoplasm. It localises to the nucleus speckle. Transcription factor required for development of the vascular component of the pronephric kidney, the glomus; may repress tubule-specific gene expression in the portion of the pronephros fated to form the glomus. Recognizes and binds to the DNA sequence 5'-GCG(T/G)GGGCG-3'. Inhibits Wnt-signaling during embryonic development. Function may be isoform-specific: the isoform containing the KTS motif is less effective in inhibiting wnt signaling. The sequence is that of Wilms tumor protein homolog A (wt1-a) from Xenopus laevis (African clawed frog).